The primary structure comprises 417 residues: Serine--tRNA ligase (417 aa).

226–228 (TSE) is an L-serine binding site. ATP-binding positions include 257–259 (RRE) and Val-273. Glu-280 serves as a coordination point for L-serine. 344–347 (ELTS) is an ATP binding site. Thr-379 lines the L-serine pocket.

It belongs to the class-II aminoacyl-tRNA synthetase family. Type-1 seryl-tRNA synthetase subfamily. In terms of assembly, homodimer. The tRNA molecule binds across the dimer.

The protein resides in the cytoplasm. It catalyses the reaction tRNA(Ser) + L-serine + ATP = L-seryl-tRNA(Ser) + AMP + diphosphate + H(+). It carries out the reaction tRNA(Sec) + L-serine + ATP = L-seryl-tRNA(Sec) + AMP + diphosphate + H(+). It participates in aminoacyl-tRNA biosynthesis; selenocysteinyl-tRNA(Sec) biosynthesis; L-seryl-tRNA(Sec) from L-serine and tRNA(Sec): step 1/1. Catalyzes the attachment of serine to tRNA(Ser). Is also able to aminoacylate tRNA(Sec) with serine, to form the misacylated tRNA L-seryl-tRNA(Sec), which will be further converted into selenocysteinyl-tRNA(Sec). The polypeptide is Serine--tRNA ligase (Mycobacterium sp. (strain JLS)).